A 355-amino-acid polypeptide reads, in one-letter code: MQPRDLSHHVAYEAGRGIEEVARELGLDPDDLVKLSSNENPFGPSPKAAEAIREHADRVNSYPKAAATDLRGEIGDLLSVDAAQVWLGNGGDGALDYLARAMLDPDDGVLVPDPGFAYYGMSARYHHGQVNSYPIEKDDDFEQSPDAILESYDGERIVYLTSPHNPTGSEVSLSDVEAVAEGTDEETLVVVDEAYGEFADSPSAVALVEERDDVAVLRTFSKAYGLAGVRLGYAVVPGEWADAYARVNTPFAASEIACRAGLAALEDDAHVEKTVETARWAREYIRSTLECRTYESAGNFVLCAVGDGGEVAEAAQKEGVIVRDTTSFGLPSCIRITCGTREETKRAVEVVNDLL.

N6-(pyridoxal phosphate)lysine is present on Lys-222.

Belongs to the class-II pyridoxal-phosphate-dependent aminotransferase family. Histidinol-phosphate aminotransferase subfamily. Pyridoxal 5'-phosphate is required as a cofactor.

It carries out the reaction L-histidinol phosphate + 2-oxoglutarate = 3-(imidazol-4-yl)-2-oxopropyl phosphate + L-glutamate. It functions in the pathway amino-acid biosynthesis; L-histidine biosynthesis; L-histidine from 5-phospho-alpha-D-ribose 1-diphosphate: step 7/9. The chain is Histidinol-phosphate aminotransferase from Natronomonas pharaonis (strain ATCC 35678 / DSM 2160 / CIP 103997 / JCM 8858 / NBRC 14720 / NCIMB 2260 / Gabara) (Halobacterium pharaonis).